The chain runs to 334 residues: Desumoylating isopeptidase 1 homolog (334 aa).

The PPPDE domain occupies 30–174; the sequence is TVVRLNVYDM…FLEKCIPQEW (145 aa). Catalysis depends on residues H55 and C133. Residues 310-325 are compositionally biased toward polar residues; the sequence is SNIGKTNSTPGTTSNG. The segment at 310–334 is disordered; the sequence is SNIGKTNSTPGTTSNGLAKPTCSEC.

It belongs to the DeSI family. In terms of tissue distribution, expressed in the pharynx, hypodermis, intestine, head neuron and tail neuron.

It localises to the cytoplasm. It is found in the nucleus. Protease which deconjugates SUMO from some substrate proteins. Has isopeptidase but not SUMO-processing activity. Collaborates with ubql-1 in the export of ubiquitinated proteins from the nucleus to the cytoplasm. The protein is Desumoylating isopeptidase 1 homolog of Caenorhabditis elegans.